The following is a 550-amino-acid chain: Crystal protein (550 aa).

Residues 1–19 form the signal peptide; sequence MNKIIILLIILLSFDIISA. A disulfide bridge connects residues Cys91 and Cys111. The N-linked (GlcNAc...) asparagine glycan is linked to Asn156. The Acyl-ester intermediate role is filled by Ser215. A disulfide bridge connects residues Cys267 and Cys274. Active-site charge relay system residues include Glu340 and His443. A glycan (N-linked (GlcNAc...) asparagine) is linked at Asn506.

It belongs to the type-B carboxylesterase/lipase family.

It localises to the cytoplasmic vesicle. It is found in the esterosome membrane. This Dictyostelium discoideum (Social amoeba) protein is Crystal protein (cryS).